The following is a 328-amino-acid chain: Tetraacyldisaccharide 4'-kinase (328 aa).

55–62 (TAGGNGKT) is a binding site for ATP.

This sequence belongs to the LpxK family.

It carries out the reaction a lipid A disaccharide + ATP = a lipid IVA + ADP + H(+). It functions in the pathway glycolipid biosynthesis; lipid IV(A) biosynthesis; lipid IV(A) from (3R)-3-hydroxytetradecanoyl-[acyl-carrier-protein] and UDP-N-acetyl-alpha-D-glucosamine: step 6/6. In terms of biological role, transfers the gamma-phosphate of ATP to the 4'-position of a tetraacyldisaccharide 1-phosphate intermediate (termed DS-1-P) to form tetraacyldisaccharide 1,4'-bis-phosphate (lipid IVA). This is Tetraacyldisaccharide 4'-kinase from Escherichia coli O157:H7.